The chain runs to 554 residues: MEFAAFADRAEAIESESADTAITEAVTDLFRASGSDLSTLARFVQGRVFPAYESRTLDIGPRLCYEAIARAAGQNVSADDVEQRLADLGEIGAVAASYDLGGQQGLAAFGAGGGGDDALTVAELDDELRNLAAVDGSGSQGTKVDILFGLFSRCSSTEAGYLARLVLSEMRIGVGEGTVRDAAAAAFDVPVEAVERAVQVSNDYGMVAEVARDEGESGLATVTLEIGRPVQAMLAQAGTVAGALEDWDRAAVEWKYDGARVQVHFDGEDARLFSRNMEEVTDPLPEVVETVESTLDAPAILDGEVVAVDDGGDPLPFQEVLRRFRRKHDVAAAREDVAVRLHAFDCLHAAGEDLLDAALETRHDRLESLFPADSDVFSQMWLSDDAEEIESLEAEALAAGQEGIMLKDPTAAYSPGKRGKHWRKRKPDVETLDCVVTGAEWGEGRRANVLGSFELSVRTDDGYATVGNVATGITDEELDDLTERFEPYIRSEDGRDVVLDPAVVFEVGYEEIQASQSYASGYALRFPRFLSVREDKTPDSADSLARVERLAESQ.

E253 is an ATP binding site. Catalysis depends on K255, which acts as the N6-AMP-lysine intermediate. R260, R275, E304, F344, R418, and K424 together coordinate ATP.

It belongs to the ATP-dependent DNA ligase family. It depends on Mg(2+) as a cofactor.

It catalyses the reaction ATP + (deoxyribonucleotide)n-3'-hydroxyl + 5'-phospho-(deoxyribonucleotide)m = (deoxyribonucleotide)n+m + AMP + diphosphate.. In terms of biological role, DNA ligase that seals nicks in double-stranded DNA during DNA replication, DNA recombination and DNA repair. This is DNA ligase from Haloarcula marismortui (strain ATCC 43049 / DSM 3752 / JCM 8966 / VKM B-1809) (Halobacterium marismortui).